Consider the following 67-residue polypeptide: MNNWIFAILMLGVAIVLSIIATFFKQIFTIFKRRKKKEPVWVTVTNAEYLDRDFWKGKEQKDKKEHD.

The chain crosses the membrane as a helical span at residues 4–24 (WIFAILMLGVAIVLSIIATFF).

The protein localises to the membrane. This is an uncharacterized protein from Bacillus anthracis.